The following is a 297-amino-acid chain: Homoserine kinase (297 aa).

ATP is bound at residue 82-92; it reads PLTRGLGSSAS.

Belongs to the GHMP kinase family. Homoserine kinase subfamily.

It localises to the cytoplasm. The enzyme catalyses L-homoserine + ATP = O-phospho-L-homoserine + ADP + H(+). The protein operates within amino-acid biosynthesis; L-threonine biosynthesis; L-threonine from L-aspartate: step 4/5. In terms of biological role, catalyzes the ATP-dependent phosphorylation of L-homoserine to L-homoserine phosphate. This is Homoserine kinase from Bacillus anthracis (strain CDC 684 / NRRL 3495).